Consider the following 174-residue polypeptide: ATP-dependent protease subunit HslV (174 aa).

Thr2 is a catalytic residue. Na(+) is bound by residues Gly157, Cys160, and Thr163.

The protein belongs to the peptidase T1B family. HslV subfamily. In terms of assembly, a double ring-shaped homohexamer of HslV is capped on each side by a ring-shaped HslU homohexamer. The assembly of the HslU/HslV complex is dependent on binding of ATP.

The protein resides in the cytoplasm. The catalysed reaction is ATP-dependent cleavage of peptide bonds with broad specificity.. Its activity is regulated as follows. Allosterically activated by HslU binding. Functionally, protease subunit of a proteasome-like degradation complex believed to be a general protein degrading machinery. The protein is ATP-dependent protease subunit HslV of Shewanella frigidimarina (strain NCIMB 400).